Here is a 180-residue protein sequence, read N- to C-terminus: UPF0227 protein YcfP (180 aa).

Belongs to the UPF0227 family.

This chain is UPF0227 protein YcfP, found in Salmonella gallinarum (strain 287/91 / NCTC 13346).